A 309-amino-acid polypeptide reads, in one-letter code: uncharacterized protein (309 aa).

Residues 1-32 constitute a signal peptide (tat-type signal); it reads MTGTAPVSRRQYLGTAGAIIGTTAGCLTGADA.

Belongs to the bacterial solute-binding protein 1 family. WtpA subfamily. Post-translationally, predicted to be exported by the Tat system. The position of the signal peptide cleavage has not been experimentally proven.

This is an uncharacterized protein from Halobacterium salinarum (strain ATCC 700922 / JCM 11081 / NRC-1) (Halobacterium halobium).